Consider the following 620-residue polypeptide: Chaperone protein HscA homolog (620 aa).

Belongs to the heat shock protein 70 family.

Its function is as follows. Chaperone involved in the maturation of iron-sulfur cluster-containing proteins. Has a low intrinsic ATPase activity which is markedly stimulated by HscB. This is Chaperone protein HscA homolog from Pseudomonas fluorescens (strain SBW25).